The following is a 486-amino-acid chain: Membrane-bound lytic murein transglycosylase F (486 aa).

Residues 1 to 21 (MTRIKLSYFTIGLVALLLALA) form the signal peptide. The segment at 22–268 (LWPNIPWRNG…RLEEKYLGHV (247 aa)) is non-LT domain. Residues 269–486 (GSFDYVDTKT…VVGPGWSIGD (218 aa)) are LT domain. E313 is an active-site residue.

The protein in the N-terminal section; belongs to the bacterial solute-binding protein 3 family. It in the C-terminal section; belongs to the transglycosylase Slt family.

The protein resides in the cell outer membrane. The catalysed reaction is Exolytic cleavage of the (1-&gt;4)-beta-glycosidic linkage between N-acetylmuramic acid (MurNAc) and N-acetylglucosamine (GlcNAc) residues in peptidoglycan, from either the reducing or the non-reducing ends of the peptidoglycan chains, with concomitant formation of a 1,6-anhydrobond in the MurNAc residue.. Functionally, murein-degrading enzyme that degrades murein glycan strands and insoluble, high-molecular weight murein sacculi, with the concomitant formation of a 1,6-anhydromuramoyl product. Lytic transglycosylases (LTs) play an integral role in the metabolism of the peptidoglycan (PG) sacculus. Their lytic action creates space within the PG sacculus to allow for its expansion as well as for the insertion of various structures such as secretion systems and flagella. This is Membrane-bound lytic murein transglycosylase F from Yersinia pseudotuberculosis serotype I (strain IP32953).